Here is a 782-residue protein sequence, read N- to C-terminus: LPS-assembly protein LptD (782 aa).

Residues 1-24 (MKKNSYTRLSIAILSTLYSVSSLA) form the signal peptide.

This sequence belongs to the LptD family. Component of the lipopolysaccharide transport and assembly complex. Interacts with LptE and LptA.

It localises to the cell outer membrane. In terms of biological role, together with LptE, is involved in the assembly of lipopolysaccharide (LPS) at the surface of the outer membrane. This is LPS-assembly protein LptD from Pasteurella multocida (strain Pm70).